Here is a 373-residue protein sequence, read N- to C-terminus: GTPase-activating protein gyp10 (373 aa).

Residues 35–220 (FLMKSLRKSV…RLFDFFISSH (186 aa)) enclose the Rab-GAP TBC domain. The chain crosses the membrane as a helical span at residues 343–363 (IFNGCNMLAAITVIGIGIVAS).

The protein localises to the endoplasmic reticulum membrane. In terms of biological role, has a role in vesicular trafficking and septation during cytokinesis. The sequence is that of GTPase-activating protein gyp10 (gyp10) from Schizosaccharomyces pombe (strain 972 / ATCC 24843) (Fission yeast).